We begin with the raw amino-acid sequence, 207 residues long: 3-isopropylmalate dehydratase small subunit (207 aa).

It belongs to the LeuD family. LeuD type 1 subfamily. Heterodimer of LeuC and LeuD.

The enzyme catalyses (2R,3S)-3-isopropylmalate = (2S)-2-isopropylmalate. It functions in the pathway amino-acid biosynthesis; L-leucine biosynthesis; L-leucine from 3-methyl-2-oxobutanoate: step 2/4. Catalyzes the isomerization between 2-isopropylmalate and 3-isopropylmalate, via the formation of 2-isopropylmaleate. This Buchnera aphidicola subsp. Rhopalosiphum padi protein is 3-isopropylmalate dehydratase small subunit (leuD).